The primary structure comprises 45 residues: Photosystem II reaction center protein K (45 aa).

The propeptide occupies 1–8 (MDVNFLLS). A helical transmembrane segment spans residues 20-40 (IVDVMPAIPVFFLLLAFVWQA).

This sequence belongs to the PsbK family. As to quaternary structure, PSII is composed of 1 copy each of membrane proteins PsbA, PsbB, PsbC, PsbD, PsbE, PsbF, PsbH, PsbI, PsbJ, PsbK, PsbL, PsbM, PsbT, PsbX, PsbY, PsbZ, Psb30/Ycf12, at least 3 peripheral proteins of the oxygen-evolving complex and a large number of cofactors. It forms dimeric complexes.

The protein resides in the plastid. The protein localises to the chloroplast thylakoid membrane. Its function is as follows. One of the components of the core complex of photosystem II (PSII). PSII is a light-driven water:plastoquinone oxidoreductase that uses light energy to abstract electrons from H(2)O, generating O(2) and a proton gradient subsequently used for ATP formation. It consists of a core antenna complex that captures photons, and an electron transfer chain that converts photonic excitation into a charge separation. The sequence is that of Photosystem II reaction center protein K from Emiliania huxleyi (Coccolithophore).